A 388-amino-acid polypeptide reads, in one-letter code: D-xylose dehydrogenase (388 aa).

This sequence belongs to the Gfo/Idh/MocA family. In terms of assembly, homotetramer. Zn(2+) is required as a cofactor.

It carries out the reaction D-xylose + NADP(+) = D-xylono-1,5-lactone + NADPH + H(+). It catalyses the reaction D-xylose + NAD(+) = D-xylono-1,5-lactone + NADH + H(+). Its pathway is carbohydrate metabolism; D-xylose degradation. Functionally, catalyzes the NADP(+)-dependent oxidation of D-xylose. Is able to use both NADP(+) and NAD(+); however, the enzyme shows a very strong preference for NADP(+). Is likely involved in the first step of the oxidative D-xylose degradation pathway. In Paenarthrobacter nicotinovorans (Arthrobacter nicotinovorans), this protein is D-xylose dehydrogenase (xdh).